A 371-amino-acid chain; its full sequence is 4-hydroxybenzoate polyprenyltransferase, mitochondrial (371 aa).

Residues 1–45 (MLGSCGAGLVRGLRAETQAWLWGTRGRSLALVHAARGLHAANWQP) constitute a mitochondrion transit peptide. Residues 46 to 83 (SPGQGPRGRPLSLSAAAVVNSAPRPLQPYLRLMRLDKP) lie on the Mitochondrial matrix side of the membrane. A helical membrane pass occupies residues 84-104 (IGTWLLYLPCTWSIGLAADPG). At 105–108 (CLPD) the chain is on the mitochondrial intermembrane side. The helical transmembrane segment at 109-129 (WYMLSLFGTGAVLMRGAGCTI) threads the bilayer. Residues 130–171 (NDMWDRDYDKKVTRTASRPIAAGDISTFRSFVFLGGQLTLAL) lie on the Mitochondrial matrix side of the membrane. The chain crosses the membrane as a helical span at residues 172 to 192 (GVLLCLNYYSIALGAASLLLV). At 193–200 (TTYPLMKR) the chain is on the mitochondrial intermembrane side. Residues 201-221 (ITYWPQLALGLTFNWGALLGW) form a helical membrane-spanning segment. The Mitochondrial matrix portion of the chain corresponds to 222 to 231 (SAVKGSCDPS). Residues 232–252 (VCLPLYFSGIMWTLIYDTIYA) traverse the membrane as a helical segment. The Mitochondrial intermembrane portion of the chain corresponds to 253–277 (HQDKKDDALIGLKSTALLFREDTKK). The helical transmembrane segment at 278 to 298 (WLSGFSVAMLGALSLVGVNSG) threads the bilayer. Over 299 to 300 (QT) the chain is Mitochondrial matrix. A helical membrane pass occupies residues 301-321 (MPYYTALAAVGAHLAHQIYTL). At 322 to 332 (DINRPEDCWEK) the chain is on the mitochondrial intermembrane side. The helical transmembrane segment at 333 to 353 (FTSNRTIGLIIFLGIVLGNLC) threads the bilayer. The Mitochondrial matrix portion of the chain corresponds to 354 to 371 (KAKETDKTRKNIENRMEN).

This sequence belongs to the UbiA prenyltransferase family. Mg(2+) serves as cofactor.

Its subcellular location is the mitochondrion inner membrane. The enzyme catalyses an all-trans-polyprenyl diphosphate + 4-hydroxybenzoate = a 4-hydroxy-3-(all-trans-polyprenyl)benzoate + diphosphate. It carries out the reaction all-trans-decaprenyl diphosphate + 4-hydroxybenzoate = 4-hydroxy-3-(all-trans-decaprenyl)benzoate + diphosphate. The catalysed reaction is all-trans-nonaprenyl diphosphate + 4-hydroxybenzoate = 4-hydroxy-3-(all-trans-nonaprenyl)benzoate + diphosphate. Its pathway is cofactor biosynthesis; ubiquinone biosynthesis. In terms of biological role, mediates the second step in the final reaction sequence of coenzyme Q (CoQ) biosynthesis. Catalyzes the prenylation of para-hydroxybenzoate (PHB) with an all-trans polyprenyl donor (such as all-trans-decaprenyl diphosphate). The length of the polyprenyl side chain varies depending on the species, in humans, the side chain is comprised of 10 isoprenyls (decaprenyl) producing CoQ10 (also known as ubiquinone), whereas rodents predominantly generate CoQ9. However, this specificity is not complete, human tissues have low amounts of CoQ9 and rodent organs contain some CoQ10. Plays a central role in the biosynthesis of CoQ10. CoQ10 is a vital molecule that transports electrons from mitochondrial respiratory chain complexes. CoQs also function as cofactors for uncoupling protein and play a role as regulators of the extracellularly-induced ceramide-dependent apoptotic pathway. Regulates mitochondrial permeability transition pore (mPTP) opening and ROS production (pivotal events in cell death) in a tissue specific manner. The sequence is that of 4-hydroxybenzoate polyprenyltransferase, mitochondrial from Bos taurus (Bovine).